The sequence spans 142 residues: Large ribosomal subunit protein uL13 (142 aa).

This sequence belongs to the universal ribosomal protein uL13 family. Part of the 50S ribosomal subunit.

Functionally, this protein is one of the early assembly proteins of the 50S ribosomal subunit, although it is not seen to bind rRNA by itself. It is important during the early stages of 50S assembly. This is Large ribosomal subunit protein uL13 from Delftia acidovorans (strain DSM 14801 / SPH-1).